The primary structure comprises 265 residues: Homeobox protein engrailed-2-A (265 aa).

Composition is skewed to basic and acidic residues over residues Met-1–Glu-12 and Gly-102–Lys-115. 3 disordered regions span residues Met-1–His-38, Leu-75–Gln-140, and Asp-156–Thr-181. Positions Asp-122–Ser-136 are enriched in low complexity. Residues Asp-176 to Thr-235 constitute a DNA-binding region (homeobox).

This sequence belongs to the engrailed homeobox family.

Its subcellular location is the nucleus. This Xenopus laevis (African clawed frog) protein is Homeobox protein engrailed-2-A (en2-a).